A 196-amino-acid chain; its full sequence is MSNIDNLTSRIIKDAEDKKRIILSEAEEKKSKIIAKKQEKAASEEKIIIEKAETEAVAREERIISSAELQARNEKLKSKQTVISKVFETTIEELCNASSDDFKGFVKTVILNSTLAGDENLILNEQGKKMIDSDFVAELNREIGSKGNITLSDKTGNFKGGFILEKNGIEINNTFEALVSSLKDEMGLEVARVLFS.

This sequence belongs to the V-ATPase E subunit family.

In terms of biological role, produces ATP from ADP in the presence of a proton gradient across the membrane. This is V-type proton ATPase subunit E from Clostridium botulinum (strain Alaska E43 / Type E3).